Here is a 113-residue protein sequence, read N- to C-terminus: Large ribosomal subunit protein uL22 (113 aa).

Belongs to the universal ribosomal protein uL22 family. In terms of assembly, part of the 50S ribosomal subunit.

Functionally, this protein binds specifically to 23S rRNA; its binding is stimulated by other ribosomal proteins, e.g. L4, L17, and L20. It is important during the early stages of 50S assembly. It makes multiple contacts with different domains of the 23S rRNA in the assembled 50S subunit and ribosome. In terms of biological role, the globular domain of the protein is located near the polypeptide exit tunnel on the outside of the subunit, while an extended beta-hairpin is found that lines the wall of the exit tunnel in the center of the 70S ribosome. In Bacillus cytotoxicus (strain DSM 22905 / CIP 110041 / 391-98 / NVH 391-98), this protein is Large ribosomal subunit protein uL22.